Consider the following 1180-residue polypeptide: DNA-directed RNA polymerase subunit beta (1180 aa).

It belongs to the RNA polymerase beta chain family. The RNAP catalytic core consists of 2 alpha, 1 beta, 1 beta' and 1 omega subunit. When a sigma factor is associated with the core the holoenzyme is formed, which can initiate transcription.

It catalyses the reaction RNA(n) + a ribonucleoside 5'-triphosphate = RNA(n+1) + diphosphate. Functionally, DNA-dependent RNA polymerase catalyzes the transcription of DNA into RNA using the four ribonucleoside triphosphates as substrates. This Macrococcus caseolyticus (strain JCSC5402) (Macrococcoides caseolyticum) protein is DNA-directed RNA polymerase subunit beta.